Consider the following 388-residue polypeptide: Succinate--CoA ligase [ADP-forming] subunit beta (388 aa).

The 236-residue stretch at 9 to 244 (KSLFAEYGLP…PSQDDAREAH (236 aa)) folds into the ATP-grasp domain. ATP-binding positions include Lys46, 53–55 (GRG), Glu99, Thr102, and Glu107. The Mg(2+) site is built by Asn199 and Asp213. Substrate is bound by residues Asn264 and 321 to 323 (GIV).

This sequence belongs to the succinate/malate CoA ligase beta subunit family. In terms of assembly, heterotetramer of two alpha and two beta subunits. Mg(2+) serves as cofactor.

The catalysed reaction is succinate + ATP + CoA = succinyl-CoA + ADP + phosphate. It catalyses the reaction GTP + succinate + CoA = succinyl-CoA + GDP + phosphate. Its pathway is carbohydrate metabolism; tricarboxylic acid cycle; succinate from succinyl-CoA (ligase route): step 1/1. Functionally, succinyl-CoA synthetase functions in the citric acid cycle (TCA), coupling the hydrolysis of succinyl-CoA to the synthesis of either ATP or GTP and thus represents the only step of substrate-level phosphorylation in the TCA. The beta subunit provides nucleotide specificity of the enzyme and binds the substrate succinate, while the binding sites for coenzyme A and phosphate are found in the alpha subunit. In Shewanella sp. (strain ANA-3), this protein is Succinate--CoA ligase [ADP-forming] subunit beta.